The following is a 176-amino-acid chain: Replication restart protein PriC (176 aa).

It belongs to the PriC family. Component of the replication restart primosome, which is composed of PriA, PriB, PriC, DnaB and DnaT; DnaG primase associates transiently with this complex. Interacts with the C-terminus of SSB; this interaction is required to load the main replicative helicase onto substrate replication forks. Interacts with helicase DnaB alone and in the DnaB-DnaC complex, probably 1:1 binding with DnaB. Interacts with DnaT.

In terms of biological role, involved in the restart of stalled replication forks, which reloads the DnaB replicative helicase on sites other than the origin of replication. Recognizes abandoned replication forks and remodels DNA single-stranded binding protein (SSB) on ssDNA to uncover a loading site for DnaB. There are several restart pathways, the PriA-PriC pathway is a minor restart pathway. Part of the minor PriC-Rep pathway for restart of stalled replication forks, which has a different substrate specificity than PriA. Part of the major restart pathway with PriA, PriB, DnaB, DnaT and DnaG primase. priB and priC have redundant roles in the cell. Binds 7-9 nucleotides of single-stranded (ss)DNA. In Klebsiella pneumoniae subsp. pneumoniae (strain ATCC 700721 / MGH 78578), this protein is Replication restart protein PriC.